The primary structure comprises 241 residues: Ubiquinone biosynthesis O-methyltransferase (241 aa).

Residues arginine 46, glycine 66, aspartate 87, and methionine 131 each contribute to the S-adenosyl-L-methionine site.

The protein belongs to the methyltransferase superfamily. UbiG/COQ3 family.

The enzyme catalyses a 3-demethylubiquinol + S-adenosyl-L-methionine = a ubiquinol + S-adenosyl-L-homocysteine + H(+). It carries out the reaction a 3-(all-trans-polyprenyl)benzene-1,2-diol + S-adenosyl-L-methionine = a 2-methoxy-6-(all-trans-polyprenyl)phenol + S-adenosyl-L-homocysteine + H(+). Its pathway is cofactor biosynthesis; ubiquinone biosynthesis. Functionally, O-methyltransferase that catalyzes the 2 O-methylation steps in the ubiquinone biosynthetic pathway. The chain is Ubiquinone biosynthesis O-methyltransferase from Bordetella avium (strain 197N).